The sequence spans 692 residues: Putative ESX-1 scaffolding and assembly protein SaeA (692 aa).

Positions 1 to 21 (MGERGELVSDLHPSDDHDADP) are enriched in basic and acidic residues. 2 disordered regions span residues 1-23 (MGERGELVSDLHPSDDHDADPRL) and 87-134 (PAAP…TTGF). A compositionally biased stretch (pro residues) spans 89 to 107 (APEPDPPPVPEPQPEPEPG).

In terms of biological role, may be involved in assembly of the ESX-1 / type VII specialized secretion system (T7SS), which exports several proteins including EsxA and EsxB. Involved in DNA conjugation in recipient (MKD8) but not donor (mc(2)155) strain. The chain is Putative ESX-1 scaffolding and assembly protein SaeA (saeA) from Mycolicibacterium smegmatis (strain MKD8) (Mycobacterium smegmatis).